A 308-amino-acid chain; its full sequence is MPELPEVEVVRRGVARWVVGRTVSSARFLHPRVTRRHVAGPDDAGARTRGLVVADAVRRGKYLWLPLATPDGRAEEAMVVHLGMSGQLLVEAADAPEEKHLRAVWTFDDGGEDLRFVDQRTFGGIAVVPLVATPDGGPGGLGETPDGSWSGSMPAPVAHIARDPLDPAFDDAVFARRLRERTTGLKRALLDQTLVSGVGNIYADEALWRAKLHYARPTRSVTPAQAAALLAGLREVMTAALDAGGTSFDSLYVNVNGASGYFDRSLAVYGQEGRPCPRCGALVRRDAFMNRSSFSCPVCQPVPRSPHW.

Pro2 serves as the catalytic Schiff-base intermediate with DNA. Glu3 acts as the Proton donor in catalysis. Lys61 (proton donor; for beta-elimination activity) is an active-site residue. His100, Arg120, and Arg181 together coordinate DNA. Residues 267 to 301 (AVYGQEGRPCPRCGALVRRDAFMNRSSFSCPVCQP) form an FPG-type zinc finger. Arg291 functions as the Proton donor; for delta-elimination activity in the catalytic mechanism.

It belongs to the FPG family. As to quaternary structure, monomer. Requires Zn(2+) as cofactor.

It catalyses the reaction Hydrolysis of DNA containing ring-opened 7-methylguanine residues, releasing 2,6-diamino-4-hydroxy-5-(N-methyl)formamidopyrimidine.. The enzyme catalyses 2'-deoxyribonucleotide-(2'-deoxyribose 5'-phosphate)-2'-deoxyribonucleotide-DNA = a 3'-end 2'-deoxyribonucleotide-(2,3-dehydro-2,3-deoxyribose 5'-phosphate)-DNA + a 5'-end 5'-phospho-2'-deoxyribonucleoside-DNA + H(+). In terms of biological role, involved in base excision repair of DNA damaged by oxidation or by mutagenic agents. Acts as a DNA glycosylase that recognizes and removes damaged bases. Has a preference for oxidized purines, such as 7,8-dihydro-8-oxoguanine (8-oxoG). Has AP (apurinic/apyrimidinic) lyase activity and introduces nicks in the DNA strand. Cleaves the DNA backbone by beta-delta elimination to generate a single-strand break at the site of the removed base with both 3'- and 5'-phosphates. The sequence is that of Formamidopyrimidine-DNA glycosylase from Kineococcus radiotolerans (strain ATCC BAA-149 / DSM 14245 / SRS30216).